A 349-amino-acid chain; its full sequence is N-acetyltaurine hydrolase (349 aa).

A divalent metal cation is bound by residues H26, H28, E169, H201, H230, and D298.

This sequence belongs to the metallo-dependent hydrolases superfamily. Phosphotriesterase family. A divalent metal cation is required as a cofactor.

The protein resides in the cytoplasm. It localises to the cytosol. The catalysed reaction is N-acetyltaurine + H2O = taurine + acetate. It carries out the reaction N-propanoyltaurine + H2O = propanoate + taurine. The enzyme catalyses N-acetyl-L-methionine + H2O = L-methionine + acetate. It catalyses the reaction N-acetyl-L-isoleucine + H2O = L-isoleucine + acetate. The catalysed reaction is N-acetyl-L-leucine + H2O = L-leucine + acetate. It carries out the reaction N-acetyl-L-valine + H2O = L-valine + acetate. In terms of biological role, N-acetyltaurine hydrolase that regulates feeding by catalyzing the hydrolysis of N-acetyltaurine into taurine and acetate. N-acetyltaurine has anorexigenic and anti-obesity effects that are dependent on GFRAL receptor and GDF15. PTER also acts on other N-acetyl amino acids (Met, Ile, Leu, Val) and N-propionyltaurine, but at lower rates. This is N-acetyltaurine hydrolase (PTER) from Bos taurus (Bovine).